Consider the following 135-residue polypeptide: Fatty acid-binding protein 5 (135 aa).

Residue alanine 2 is modified to N-acetylalanine. Lysine 17 carries the N6-acetyllysine modification. Residues 24 to 34 carry the Nuclear localization signal motif; it reads KELGVGIALRK. N-eicosanoyl ethanolamine-binding residues include cysteine 43 and arginine 109. Cysteine 120 and cysteine 127 form a disulfide bridge. 129–131 is a (9Z,12Z)-octadecadienoate binding site; that stretch reads RIY. Residue tyrosine 131 coordinates N-eicosanoyl ethanolamine. Tyrosine 131 lines the hexadecanoate pocket. At tyrosine 131 the chain carries Phosphotyrosine.

It belongs to the calycin superfamily. Fatty-acid binding protein (FABP) family. Monomer. Homodimer. Keratinocytes; highly expressed in psoriatic skin. Expressed in brain gray matter.

The protein resides in the cytoplasm. It localises to the nucleus. The protein localises to the synapse. Its subcellular location is the postsynaptic density. It is found in the secreted. It carries out the reaction hexadecanoate(out) = hexadecanoate(in). The enzyme catalyses (9Z,12Z)-octadecadienoate(out) = (9Z,12Z)-octadecadienoate(in). It catalyses the reaction (9Z)-octadecenoate(out) = (9Z)-octadecenoate(in). In terms of biological role, intracellular carrier for long-chain fatty acids and related active lipids, such as endocannabinoids, that regulate the metabolism and actions of the ligands they bind. In addition to the cytosolic transport, selectively delivers specific fatty acids from the cytosol to the nucleus, wherein they activate nuclear receptors. Delivers retinoic acid to the nuclear receptor peroxisome proliferator-activated receptor delta; which promotes proliferation and survival. May also serve as a synaptic carrier of endocannabinoid at central synapses and thus controls retrograde endocannabinoid signaling. Modulates inflammation by regulating PTGES induction via NF-kappa-B activation, and prostaglandin E2 (PGE2) biosynthesis during inflammation. May be involved in keratinocyte differentiation. The sequence is that of Fatty acid-binding protein 5 from Homo sapiens (Human).